The following is an 873-amino-acid chain: E3 ubiquitin-protein ligase UPL5 (873 aa).

Polar residues predominate over residues 1–19 (MTLSRSSADDSTNNANRSY). Disordered stretches follow at residues 1-37 (MTLSRSSADDSTNNANRSYSAVAGTDNKRKRDEDSSD) and 70-90 (RSGENSRSLSSSGECSSSNRP). Residues 95 to 171 (LQIFVRMMSG…LQLVARMQST (77 aa)) form the Ubiquitin-like domain. The 25-residue stretch at 272–296 (CLPIVLEFCKLLRKVCPDQKLYVTC) folds into the C-type lectin domain. The HECT domain maps to 532-873 (SPEALHGGLF…DHVSSSFGKW (342 aa)). C839 serves as the catalytic Glycyl thioester intermediate.

The protein belongs to the UPL family. Interacts with WRKY53.

Its subcellular location is the cytoplasm. The enzyme catalyses S-ubiquitinyl-[E2 ubiquitin-conjugating enzyme]-L-cysteine + [acceptor protein]-L-lysine = [E2 ubiquitin-conjugating enzyme]-L-cysteine + N(6)-ubiquitinyl-[acceptor protein]-L-lysine.. The protein operates within protein modification; protein ubiquitination. Its function is as follows. E3 ubiquitin protein ligase that regulates leaf senescence through ubiquitination and subsequent degradation of WRKY53. This Arabidopsis thaliana (Mouse-ear cress) protein is E3 ubiquitin-protein ligase UPL5 (UPL5).